The following is a 144-amino-acid chain: Flagellar assembly factor FliW (144 aa).

This sequence belongs to the FliW family. In terms of assembly, interacts with translational regulator CsrA and flagellin(s).

The protein resides in the cytoplasm. In terms of biological role, acts as an anti-CsrA protein, binds CsrA and prevents it from repressing translation of its target genes, one of which is flagellin. Binds to flagellin and participates in the assembly of the flagellum. This chain is Flagellar assembly factor FliW, found in Bacillus pumilus (strain SAFR-032).